A 226-amino-acid polypeptide reads, in one-letter code: Ribonuclease 3 (226 aa).

The 123-residue stretch at 5 to 127 (TFQRGDPIGH…IVAAIYLDCG (123 aa)) folds into the RNase III domain. Glutamate 40 provides a ligand contact to Mg(2+). Residue aspartate 44 is part of the active site. Residues aspartate 113 and glutamate 116 each contribute to the Mg(2+) site. Glutamate 116 is an active-site residue. A DRBM domain is found at 154-224 (DPKTRLQEWL…ATLVIAQLDS (71 aa)).

The protein belongs to the ribonuclease III family. As to quaternary structure, homodimer. Mg(2+) is required as a cofactor.

Its subcellular location is the cytoplasm. The catalysed reaction is Endonucleolytic cleavage to 5'-phosphomonoester.. Its function is as follows. Digests double-stranded RNA. Involved in the processing of primary rRNA transcript to yield the immediate precursors to the large and small rRNAs (23S and 16S). Processes some mRNAs, and tRNAs when they are encoded in the rRNA operon. Processes pre-crRNA and tracrRNA of type II CRISPR loci if present in the organism. The sequence is that of Ribonuclease 3 from Xanthomonas axonopodis pv. citri (strain 306).